The sequence spans 168 residues: S-ribosylhomocysteine lyase (168 aa).

Residues His54, His58, and Cys128 each contribute to the Fe cation site.

It belongs to the LuxS family. Homodimer. The cofactor is Fe cation.

It catalyses the reaction S-(5-deoxy-D-ribos-5-yl)-L-homocysteine = (S)-4,5-dihydroxypentane-2,3-dione + L-homocysteine. Functionally, involved in the synthesis of autoinducer 2 (AI-2) which is secreted by bacteria and is used to communicate both the cell density and the metabolic potential of the environment. The regulation of gene expression in response to changes in cell density is called quorum sensing. Catalyzes the transformation of S-ribosylhomocysteine (RHC) to homocysteine (HC) and 4,5-dihydroxy-2,3-pentadione (DPD). The polypeptide is S-ribosylhomocysteine lyase (Neisseria gonorrhoeae (strain ATCC 700825 / FA 1090)).